Consider the following 85-residue polypeptide: Small ribosomal subunit protein bS16 (85 aa).

It belongs to the bacterial ribosomal protein bS16 family.

The polypeptide is Small ribosomal subunit protein bS16 (Pseudomonas syringae pv. tomato (strain ATCC BAA-871 / DC3000)).